A 446-amino-acid polypeptide reads, in one-letter code: Probable glycine dehydrogenase (decarboxylating) subunit 1 (446 aa).

It belongs to the GcvP family. N-terminal subunit subfamily. As to quaternary structure, the glycine cleavage system is composed of four proteins: P, T, L and H. In this organism, the P 'protein' is a heterodimer of two subunits.

The enzyme catalyses N(6)-[(R)-lipoyl]-L-lysyl-[glycine-cleavage complex H protein] + glycine + H(+) = N(6)-[(R)-S(8)-aminomethyldihydrolipoyl]-L-lysyl-[glycine-cleavage complex H protein] + CO2. In terms of biological role, the glycine cleavage system catalyzes the degradation of glycine. The P protein binds the alpha-amino group of glycine through its pyridoxal phosphate cofactor; CO(2) is released and the remaining methylamine moiety is then transferred to the lipoamide cofactor of the H protein. This is Probable glycine dehydrogenase (decarboxylating) subunit 1 from Desulforamulus reducens (strain ATCC BAA-1160 / DSM 100696 / MI-1) (Desulfotomaculum reducens).